A 516-amino-acid polypeptide reads, in one-letter code: Probable 2-isopropylmalate synthase (516 aa).

The region spanning 20–271 (VTVFDTTLRD…KTNIRTEYLV (252 aa)) is the Pyruvate carboxyltransferase domain.

This sequence belongs to the alpha-IPM synthase/homocitrate synthase family.

It catalyses the reaction 3-methyl-2-oxobutanoate + acetyl-CoA + H2O = (2S)-2-isopropylmalate + CoA + H(+). It participates in amino-acid biosynthesis; L-leucine biosynthesis; L-leucine from 3-methyl-2-oxobutanoate: step 1/4. In terms of biological role, catalyzes the condensation of the acetyl group of acetyl-CoA with 3-methyl-2-oxobutanoate (2-oxoisovalerate) to form 3-carboxy-3-hydroxy-4-methylpentanoate (2-isopropylmalate). The polypeptide is Probable 2-isopropylmalate synthase (leuA) (Methanosarcina mazei (strain ATCC BAA-159 / DSM 3647 / Goe1 / Go1 / JCM 11833 / OCM 88) (Methanosarcina frisia)).